The primary structure comprises 184 residues: ATP synthase subunit b, chloroplastic (184 aa).

A helical transmembrane segment spans residues 27 to 49 (LATNPINLSVVLGVLIFFGKGVL).

The protein belongs to the ATPase B chain family. In terms of assembly, F-type ATPases have 2 components, F(1) - the catalytic core - and F(0) - the membrane proton channel. F(1) has five subunits: alpha(3), beta(3), gamma(1), delta(1), epsilon(1). F(0) has four main subunits: a(1), b(1), b'(1) and c(10-14). The alpha and beta chains form an alternating ring which encloses part of the gamma chain. F(1) is attached to F(0) by a central stalk formed by the gamma and epsilon chains, while a peripheral stalk is formed by the delta, b and b' chains.

Its subcellular location is the plastid. The protein resides in the chloroplast thylakoid membrane. F(1)F(0) ATP synthase produces ATP from ADP in the presence of a proton or sodium gradient. F-type ATPases consist of two structural domains, F(1) containing the extramembraneous catalytic core and F(0) containing the membrane proton channel, linked together by a central stalk and a peripheral stalk. During catalysis, ATP synthesis in the catalytic domain of F(1) is coupled via a rotary mechanism of the central stalk subunits to proton translocation. Functionally, component of the F(0) channel, it forms part of the peripheral stalk, linking F(1) to F(0). The chain is ATP synthase subunit b, chloroplastic from Populus alba (White poplar).